The primary structure comprises 341 residues: Phosphoribosylformylglycinamidine cyclo-ligase (341 aa).

It belongs to the AIR synthase family.

The protein localises to the cytoplasm. It carries out the reaction 2-formamido-N(1)-(5-O-phospho-beta-D-ribosyl)acetamidine + ATP = 5-amino-1-(5-phospho-beta-D-ribosyl)imidazole + ADP + phosphate + H(+). It participates in purine metabolism; IMP biosynthesis via de novo pathway; 5-amino-1-(5-phospho-D-ribosyl)imidazole from N(2)-formyl-N(1)-(5-phospho-D-ribosyl)glycinamide: step 2/2. The protein is Phosphoribosylformylglycinamidine cyclo-ligase of Lachnoclostridium phytofermentans (strain ATCC 700394 / DSM 18823 / ISDg) (Clostridium phytofermentans).